Reading from the N-terminus, the 404-residue chain is Argininosuccinate synthase (404 aa).

ATP contacts are provided by residues 10 to 18 and A38; that span reads AYSGGVDTS. Y89 is a binding site for L-citrulline. An ATP-binding site is contributed by G119. Residues T121, N125, and D126 each coordinate L-aspartate. N125 lines the L-citrulline pocket. 5 residues coordinate L-citrulline: R129, S177, S186, E262, and Y274.

The protein belongs to the argininosuccinate synthase family. Type 1 subfamily. Homotetramer.

The protein localises to the cytoplasm. The catalysed reaction is L-citrulline + L-aspartate + ATP = 2-(N(omega)-L-arginino)succinate + AMP + diphosphate + H(+). The protein operates within amino-acid biosynthesis; L-arginine biosynthesis; L-arginine from L-ornithine and carbamoyl phosphate: step 2/3. The sequence is that of Argininosuccinate synthase from Prochlorococcus marinus subsp. pastoris (strain CCMP1986 / NIES-2087 / MED4).